Consider the following 117-residue polypeptide: Large ribosomal subunit protein bL20c (117 aa).

The protein belongs to the bacterial ribosomal protein bL20 family.

The protein resides in the plastid. The protein localises to the chloroplast. Binds directly to 23S ribosomal RNA and is necessary for the in vitro assembly process of the 50S ribosomal subunit. It is not involved in the protein synthesizing functions of that subunit. This is Large ribosomal subunit protein bL20c from Gossypium hirsutum (Upland cotton).